Reading from the N-terminus, the 452-residue chain is tRNA modification GTPase MnmE (452 aa).

(6S)-5-formyl-5,6,7,8-tetrahydrofolate-binding residues include R25, E82, and R125. Positions 221 to 374 constitute a TrmE-type G domain; that stretch reads GLHVVLAGKP…LRARLLALAG (154 aa). Position 231 (N231) interacts with K(+). Residues 231–236, 250–256, 275–278, and 355–357 each bind GTP; these read NVGKSS, TPIAGTT, DTAG, and SAR. Residue S235 coordinates Mg(2+). Residues T250, I252, and T255 each coordinate K(+). Mg(2+) is bound at residue T256. K452 lines the (6S)-5-formyl-5,6,7,8-tetrahydrofolate pocket.

This sequence belongs to the TRAFAC class TrmE-Era-EngA-EngB-Septin-like GTPase superfamily. TrmE GTPase family. Homodimer. Heterotetramer of two MnmE and two MnmG subunits. K(+) serves as cofactor.

It localises to the cytoplasm. Its function is as follows. Exhibits a very high intrinsic GTPase hydrolysis rate. Involved in the addition of a carboxymethylaminomethyl (cmnm) group at the wobble position (U34) of certain tRNAs, forming tRNA-cmnm(5)s(2)U34. This chain is tRNA modification GTPase MnmE, found in Bordetella petrii (strain ATCC BAA-461 / DSM 12804 / CCUG 43448).